Here is a 296-residue protein sequence, read N- to C-terminus: Protoheme IX farnesyltransferase (296 aa).

8 helical membrane-spanning segments follow: residues 8 to 28, 35 to 55, 84 to 104, 107 to 127, 132 to 152, 162 to 182, 215 to 235, and 264 to 284; these read VTKPGIIMGNLISVAGGFFLA, WILMLATVIGLSLVVASGCAI, AAFFHGIVLGVIGFALLSYFT, VAVAFAAFGYVVYVGLYTMYF, VYGTFVGSLSGAVPPVVGYCA, AILLTMFCIWQMPHSYAIAIF, FAVVAALLPLTGYVGIGFMVV, and VFFFSIITVTALSVTMALDFN.

Belongs to the UbiA prenyltransferase family. Protoheme IX farnesyltransferase subfamily.

Its subcellular location is the cell inner membrane. The enzyme catalyses heme b + (2E,6E)-farnesyl diphosphate + H2O = Fe(II)-heme o + diphosphate. Its pathway is porphyrin-containing compound metabolism; heme O biosynthesis; heme O from protoheme: step 1/1. Functionally, converts heme B (protoheme IX) to heme O by substitution of the vinyl group on carbon 2 of heme B porphyrin ring with a hydroxyethyl farnesyl side group. This Marinomonas sp. (strain MWYL1) protein is Protoheme IX farnesyltransferase.